Reading from the N-terminus, the 158-residue chain is Endoribonuclease YbeY (158 aa).

Zn(2+) contacts are provided by His119, His123, and His129.

The protein belongs to the endoribonuclease YbeY family. Zn(2+) is required as a cofactor.

It is found in the cytoplasm. Functionally, single strand-specific metallo-endoribonuclease involved in late-stage 70S ribosome quality control and in maturation of the 3' terminus of the 16S rRNA. The protein is Endoribonuclease YbeY of Acinetobacter baumannii (strain ACICU).